We begin with the raw amino-acid sequence, 356 residues long: Phosphoribosyl pyrophosphate synthase-associated protein 1 (356 aa).

Methionine 1 is subject to N-acetylmethionine. Phosphoserine occurs at positions 177 and 215.

Belongs to the ribose-phosphate pyrophosphokinase family. In terms of assembly, binds to PRPS1 and PRPS2. In terms of tissue distribution, ubiquitous.

Seems to play a negative regulatory role in 5-phosphoribose 1-diphosphate synthesis. The polypeptide is Phosphoribosyl pyrophosphate synthase-associated protein 1 (Prpsap1) (Rattus norvegicus (Rat)).